The following is a 79-amino-acid chain: Sec-independent protein translocase protein TatA (79 aa).

A helical membrane pass occupies residues M1–F21. The interval E48–G79 is disordered. The segment covering K66–G79 has biased composition (basic and acidic residues).

The protein belongs to the TatA/E family. The Tat system comprises two distinct complexes: a TatABC complex, containing multiple copies of TatA, TatB and TatC subunits, and a separate TatA complex, containing only TatA subunits. Substrates initially bind to the TatABC complex, which probably triggers association of the separate TatA complex to form the active translocon.

The protein localises to the cell inner membrane. Functionally, part of the twin-arginine translocation (Tat) system that transports large folded proteins containing a characteristic twin-arginine motif in their signal peptide across membranes. TatA could form the protein-conducting channel of the Tat system. The protein is Sec-independent protein translocase protein TatA of Helicobacter acinonychis (strain Sheeba).